The chain runs to 291 residues: N-acetylmannosamine kinase (291 aa).

ATP contacts are provided by residues 5 to 12 and 132 to 139; these read AIDIGGTK and GVGGGVVS. Residues H156, C166, C168, and C173 each coordinate Zn(2+).

It belongs to the ROK (NagC/XylR) family. NanK subfamily. As to quaternary structure, homodimer.

The enzyme catalyses an N-acyl-D-mannosamine + ATP = an N-acyl-D-mannosamine 6-phosphate + ADP + H(+). It participates in amino-sugar metabolism; N-acetylneuraminate degradation; D-fructose 6-phosphate from N-acetylneuraminate: step 2/5. In terms of biological role, catalyzes the phosphorylation of N-acetylmannosamine (ManNAc) to ManNAc-6-P. In Escherichia coli (strain K12 / MC4100 / BW2952), this protein is N-acetylmannosamine kinase.